The sequence spans 58 residues: uncharacterized protein (58 aa).

A helical membrane pass occupies residues 5–27; the sequence is FLHANITIIPHSVLYVSLSYYII.

It localises to the membrane. This is an uncharacterized protein from Saccharomyces cerevisiae (strain ATCC 204508 / S288c) (Baker's yeast).